Reading from the N-terminus, the 237-residue chain is Ubiquinone/menaquinone biosynthesis C-methyltransferase UbiE (237 aa).

S-adenosyl-L-methionine is bound by residues Thr60 and Asp80.

The protein belongs to the class I-like SAM-binding methyltransferase superfamily. MenG/UbiE family.

It carries out the reaction a 2-demethylmenaquinol + S-adenosyl-L-methionine = a menaquinol + S-adenosyl-L-homocysteine + H(+). The enzyme catalyses a 2-methoxy-6-(all-trans-polyprenyl)benzene-1,4-diol + S-adenosyl-L-methionine = a 5-methoxy-2-methyl-3-(all-trans-polyprenyl)benzene-1,4-diol + S-adenosyl-L-homocysteine + H(+). It participates in quinol/quinone metabolism; menaquinone biosynthesis; menaquinol from 1,4-dihydroxy-2-naphthoate: step 2/2. The protein operates within cofactor biosynthesis; ubiquinone biosynthesis. Functionally, methyltransferase required for the conversion of demethylmenaquinol (DMKH2) to menaquinol (MKH2) and the conversion of 2-polyprenyl-6-methoxy-1,4-benzoquinol (DDMQH2) to 2-polyprenyl-3-methyl-6-methoxy-1,4-benzoquinol (DMQH2). This Syntrophotalea carbinolica (strain DSM 2380 / NBRC 103641 / GraBd1) (Pelobacter carbinolicus) protein is Ubiquinone/menaquinone biosynthesis C-methyltransferase UbiE.